Reading from the N-terminus, the 114-residue chain is Large ribosomal subunit protein bL20 (114 aa).

It belongs to the bacterial ribosomal protein bL20 family.

Its function is as follows. Binds directly to 23S ribosomal RNA and is necessary for the in vitro assembly process of the 50S ribosomal subunit. It is not involved in the protein synthesizing functions of that subunit. This Anaeromyxobacter sp. (strain Fw109-5) protein is Large ribosomal subunit protein bL20.